The chain runs to 299 residues: ATP phosphoribosyltransferase (299 aa).

Belongs to the ATP phosphoribosyltransferase family. Long subfamily. In terms of assembly, equilibrium between an active dimeric form, an inactive hexameric form and higher aggregates. Interconversion between the various forms is largely reversible and is influenced by the natural substrates and inhibitors of the enzyme. Requires Mg(2+) as cofactor.

It localises to the cytoplasm. The enzyme catalyses 1-(5-phospho-beta-D-ribosyl)-ATP + diphosphate = 5-phospho-alpha-D-ribose 1-diphosphate + ATP. It participates in amino-acid biosynthesis; L-histidine biosynthesis; L-histidine from 5-phospho-alpha-D-ribose 1-diphosphate: step 1/9. Its activity is regulated as follows. Feedback inhibited by histidine. Catalyzes the condensation of ATP and 5-phosphoribose 1-diphosphate to form N'-(5'-phosphoribosyl)-ATP (PR-ATP). Has a crucial role in the pathway because the rate of histidine biosynthesis seems to be controlled primarily by regulation of HisG enzymatic activity. This is ATP phosphoribosyltransferase from Buchnera aphidicola subsp. Baizongia pistaciae (strain Bp).